A 224-amino-acid chain; its full sequence is MESNTDNYFIFCLYNSKYPHKAIVINENKCSPELSQKITDLKQLSSKIRCVIKDETDHYYVNDNPVENSSRELIDYWMNLLRLVEIDYDSDNFDTAFYDSLTYMYLSDQKYRLMSPNELQTRLSTTKKSDTNNVWCTIVSDVDFDYVPNIIFRYFIVKKSTTDIVSILSELKKVNGVLGINPAKKSSTELDCWGYLRVTSTEVMNRLLSEGFNCANGQIEFDFL.

This is an uncharacterized protein from Acanthamoeba polyphaga mimivirus (APMV).